A 282-amino-acid chain; its full sequence is Light-independent protochlorophyllide reductase iron-sulfur ATP-binding protein (282 aa).

ATP-binding positions include 10–15 and Lys39; that span reads GIGKST. Ser14 is a Mg(2+) binding site. [4Fe-4S] cluster contacts are provided by Cys95 and Cys129. 180-181 contributes to the ATP binding site; sequence NR.

The protein belongs to the NifH/BchL/ChlL family. Homodimer. Protochlorophyllide reductase is composed of three subunits; ChlL, ChlN and ChlB. It depends on [4Fe-4S] cluster as a cofactor.

It localises to the plastid. The protein resides in the cyanelle. It catalyses the reaction chlorophyllide a + oxidized 2[4Fe-4S]-[ferredoxin] + 2 ADP + 2 phosphate = protochlorophyllide a + reduced 2[4Fe-4S]-[ferredoxin] + 2 ATP + 2 H2O. Its pathway is porphyrin-containing compound metabolism; chlorophyll biosynthesis (light-independent). Component of the dark-operative protochlorophyllide reductase (DPOR) that uses Mg-ATP and reduced ferredoxin to reduce ring D of protochlorophyllide (Pchlide) to form chlorophyllide a (Chlide). This reaction is light-independent. The L component serves as a unique electron donor to the NB-component of the complex, and binds Mg-ATP. The polypeptide is Light-independent protochlorophyllide reductase iron-sulfur ATP-binding protein (Cyanophora paradoxa).